A 247-amino-acid chain; its full sequence is MAAELEPLMAEWLGAEKAEDTRGQAASLNTMEDLLETVKKLQKEGSLEPQIEDLIHRINELQQGPAKKRSSEELGEAQALQEAMHRELDSLNEERVHLEEVLRKKQEAVSILKKHPQERDSDTPHLDAQQLEERLADLARQHKDLWEFHVLQQRLAQEISTMEHRKDQLLAERTLLRARLEKVEQRLQEARETWDSPGNCGLKTELEELEGQSQRSPEAQNDKGEASQEEQHHLETSEELPRTGTLC.

The stretch at 71-196 (SEELGEAQAL…LQEARETWDS (126 aa)) forms a coiled coil. A disordered region spans residues 189-247 (EARETWDSPGNCGLKTELEELEGQSQRSPEAQNDKGEASQEEQHHLETSEELPRTGTLC). A compositionally biased stretch (basic and acidic residues) spans 220–241 (QNDKGEASQEEQHHLETSEELP).

This sequence belongs to the SYCE family. In terms of tissue distribution, isoform 1 is abundantly expressed in testis and weakly in ovary, it is not found in other tissues. Isoform 2 is expressed in testis and poorly in brain, heart, lung and other examined tissues.

Its function is as follows. May be involved in meiosis. Isoform 1 may be involved in meiosis during spermatogenesis while isoform 2 is probably related to a later stage of meiosis, in the development stage of secondary spermatocytes and spermatids. The protein is Synaptonemal complex central element protein 1-like (Syce1l) of Mus musculus (Mouse).